Consider the following 389-residue polypeptide: Phosphoglycerate kinase (389 aa).

Residues Asp-21–Asn-23, Arg-36, His-59–Arg-62, Arg-112, and Arg-145 each bind substrate. ATP is bound by residues Lys-196, Glu-313, and Gly-342 to Thr-345.

This sequence belongs to the phosphoglycerate kinase family. In terms of assembly, monomer.

The protein resides in the cytoplasm. It carries out the reaction (2R)-3-phosphoglycerate + ATP = (2R)-3-phospho-glyceroyl phosphate + ADP. Its pathway is carbohydrate degradation; glycolysis; pyruvate from D-glyceraldehyde 3-phosphate: step 2/5. The sequence is that of Phosphoglycerate kinase from Histophilus somni (strain 2336) (Haemophilus somnus).